The primary structure comprises 1669 residues: Dystrophin, isoform B (1669 aa).

Residues M1 to P11 are compositionally biased toward pro residues. 5 disordered regions span residues M1 to E28, R43 to A243, R327 to I356, G389 to S417, and S481 to G508. The span at S53–L62 shows a compositional bias: polar residues. The segment covering G118–R131 has biased composition (pro residues). Residues K132–S147 show a composition bias toward low complexity. A compositionally biased stretch (basic and acidic residues) spans K153–S166. Low complexity-rich tracts occupy residues A328–Q347 and S396–G405. Residues S485–T500 show a composition bias toward basic and acidic residues. 4 Spectrin repeats span residues Q541–H643, Q650–E747, N754–D883, and R890–C990. Residues V827–R851 form a disordered region. Positions A994–K1024 are disordered. One can recognise a WW domain in the interval Q1021–M1054. The ZZ-type zinc finger occupies K1279–T1335. Zn(2+) contacts are provided by C1284, C1287, C1299, C1302, C1308, C1311, H1321, and H1325. The residue at position 1379 (S1379) is a Phosphoserine. Disordered stretches follow at residues E1488–G1516 and D1559–K1669. Composition is skewed to polar residues over residues N1497–L1509 and A1580–G1611. The segment covering Q1630–D1641 has biased composition (acidic residues). Over residues S1642–T1660 the composition is skewed to low complexity.

As to quaternary structure, component of the dystrophin associated protein complex (DAPC). Interacts with Dg, via the Dg WW domain binding sites. In terms of tissue distribution, expressed in neuronally derived tissues, mainly the CNS and the brain of stage 16 embryos. Lower level expression is seen in the sensory organs. Expression is absent from the musculature. In larvae, expression is predominant throughout the neuropil and brain and in the eye antennal disks.

It is found in the cell membrane. It localises to the sarcolemma. Its subcellular location is the cytoplasm. The protein resides in the cytoskeleton. Required for the maintenance of appropriate synaptic retrograde communication and the stabilization of muscle cell architecture or physiology. May play a role in anchoring the cytoskeleton to the plasma membrane. The protein is Dystrophin, isoform B (Dys) of Drosophila melanogaster (Fruit fly).